The primary structure comprises 274 residues: Eukaryotic translation initiation factor 3 subunit J (274 aa).

Disordered regions lie at residues M1–H120 and E227–S246. Residues D30–V50 are compositionally biased toward acidic residues. Residues E46 to E112 adopt a coiled-coil conformation. Basic and acidic residues-rich tracts occupy residues E51–A67 and R79–A92. Residues E93–E102 show a composition bias toward acidic residues. A compositionally biased stretch (basic and acidic residues) spans A103–H120.

It belongs to the eIF-3 subunit J family. As to quaternary structure, component of the eukaryotic translation initiation factor 3 (eIF-3) complex.

Its subcellular location is the cytoplasm. Its function is as follows. Component of the eukaryotic translation initiation factor 3 (eIF-3) complex, which is involved in protein synthesis of a specialized repertoire of mRNAs and, together with other initiation factors, stimulates binding of mRNA and methionyl-tRNAi to the 40S ribosome. The eIF-3 complex specifically targets and initiates translation of a subset of mRNAs involved in cell proliferation. This chain is Eukaryotic translation initiation factor 3 subunit J (hcr-1), found in Neurospora crassa (strain ATCC 24698 / 74-OR23-1A / CBS 708.71 / DSM 1257 / FGSC 987).